The following is a 432-amino-acid chain: N-acylneuraminate cytidylyltransferase (432 aa).

The substrate site is built by Arg39, Asn49, Arg98, Ser107, Ser109, and Gln130. The active site involves Arg188.

It belongs to the CMP-NeuNAc synthase family. Homotetramer; the active enzyme is formed by a dimer of dimers. In terms of tissue distribution, expressed in testis, ovary and liver.

The protein resides in the nucleus. It catalyses the reaction an N-acylneuraminate + CTP = a CMP-N-acyl-beta-neuraminate + diphosphate. The protein operates within amino-sugar metabolism; N-acetylneuraminate metabolism. Catalyzes the activation of N-acetylneuraminic acid (NeuNAc) to cytidine 5'-monophosphate N-acetylneuraminic acid (CMP-NeuNAc), a substrate required for the addition of sialic acid. This chain is N-acylneuraminate cytidylyltransferase (cmas), found in Oncorhynchus mykiss (Rainbow trout).